A 308-amino-acid chain; its full sequence is Mitochondrial import receptor subunit TOM40B (308 aa).

Residues 1–29 (MGNTLGLAPMGALPRRSPRREEPLPNPGS) form a disordered region. The interval 281-308 (PLPVTLALGAFLNHWRNRFHCGFSITVG) is required for mitochondrial targeting.

Belongs to the Tom40 family. Forms part of the preprotein translocase of the outer mitochondrial membrane (TOM complex) containing TOMM22, TOMM40, TOMM40L and TOMM70. Interacts with mitochondrial targeting sequences.

It is found in the mitochondrion outer membrane. In terms of biological role, potential channel-forming protein implicated in import of protein precursors into mitochondria. This is Mitochondrial import receptor subunit TOM40B from Bos taurus (Bovine).